The sequence spans 506 residues: Maturase K (506 aa).

It belongs to the intron maturase 2 family. MatK subfamily.

The protein resides in the plastid. It localises to the chloroplast. In terms of biological role, usually encoded in the trnK tRNA gene intron. Probably assists in splicing its own and other chloroplast group II introns. This Trifolium resupinatum (Persian clover) protein is Maturase K.